The sequence spans 352 residues: MTIAVGRAPAGRGWFDVLDDWLKRDRFVFVGWSGLLLFPCAYMALGGWLTGTTFVTSWYTHGIASSYLEGCNFLTAAVSTPADSMGHSLLLLWGPEAQGDFVRWCQLGGLWAFVALHGAFGLIGFMLRQFEIARLVGIRPYNAIAFSGPIAVFVSVFLMYPLGQSSWFFAPSFGVAAIFRFLLFLQGFHNWTLNPFHMMGVAGILGGALLCAIHGATVENTLFEDGDGANTFKAFEPTQEEETYSMVTANRFWSQIFGIAFSNKRWLHFFMLFVPVMGLWTSSIGIIGLALNLRAYDFVSQELRAAEDPEFETFYTKNILLNEGLRAWMAPADQPHENFIFPEEVLPRGNAL.

The chain crosses the membrane as a helical span at residues 40-60 (CAYMALGGWLTGTTFVTSWYT). His117 is a binding site for chlorophyll a. Residues 124 to 140 (GFMLRQFEIARLVGIRP) form a helical membrane-spanning segment. Positions 129 and 142 each coordinate pheophytin a. A helical membrane pass occupies residues 152–165 (VFVSVFLMYPLGQS). His197 is a binding site for chlorophyll a. Residues 207–227 (GALLCAIHGATVENTLFEDGD) traverse the membrane as a helical segment. 2 residues coordinate a plastoquinone: His214 and Phe261. Position 214 (His214) interacts with Fe cation. Position 268 (His268) interacts with Fe cation. Residues 278–294 (GLWTSSIGIIGLALNLR) traverse the membrane as a helical segment.

This sequence belongs to the reaction center PufL/M/PsbA/D family. As to quaternary structure, PSII is composed of 1 copy each of membrane proteins PsbA, PsbB, PsbC, PsbD, PsbE, PsbF, PsbH, PsbI, PsbJ, PsbK, PsbL, PsbM, PsbT, PsbX, PsbY, PsbZ, Psb30/Ycf12, peripheral proteins PsbO, CyanoQ (PsbQ), PsbU, PsbV and a large number of cofactors. It forms dimeric complexes. It depends on The D1/D2 heterodimer binds P680, chlorophylls that are the primary electron donor of PSII, and subsequent electron acceptors. It shares a non-heme iron and each subunit binds pheophytin, quinone, additional chlorophylls, carotenoids and lipids. There is also a Cl(-1) ion associated with D1 and D2, which is required for oxygen evolution. The PSII complex binds additional chlorophylls, carotenoids and specific lipids. as a cofactor.

The protein localises to the cellular thylakoid membrane. It catalyses the reaction 2 a plastoquinone + 4 hnu + 2 H2O = 2 a plastoquinol + O2. Its function is as follows. Photosystem II (PSII) is a light-driven water:plastoquinone oxidoreductase that uses light energy to abstract electrons from H(2)O, generating O(2) and a proton gradient subsequently used for ATP formation. It consists of a core antenna complex that captures photons, and an electron transfer chain that converts photonic excitation into a charge separation. The D1/D2 (PsbA/PsbD) reaction center heterodimer binds P680, the primary electron donor of PSII as well as several subsequent electron acceptors. D2 is needed for assembly of a stable PSII complex. This chain is Photosystem II D2 protein, found in Synechococcus sp. (strain RCC307).